A 423-amino-acid chain; its full sequence is Glucose-1-phosphate adenylyltransferase (423 aa).

Alpha-D-glucose 1-phosphate is bound by residues Y108, G173, 188 to 189 (EK), and S207.

Belongs to the bacterial/plant glucose-1-phosphate adenylyltransferase family. As to quaternary structure, homotetramer.

It catalyses the reaction alpha-D-glucose 1-phosphate + ATP + H(+) = ADP-alpha-D-glucose + diphosphate. The protein operates within glycan biosynthesis; glycogen biosynthesis. In terms of biological role, involved in the biosynthesis of ADP-glucose, a building block required for the elongation reactions to produce glycogen. Catalyzes the reaction between ATP and alpha-D-glucose 1-phosphate (G1P) to produce pyrophosphate and ADP-Glc. This chain is Glucose-1-phosphate adenylyltransferase, found in Francisella tularensis subsp. tularensis (strain WY96-3418).